A 349-amino-acid polypeptide reads, in one-letter code: Green-sensitive opsin-2 (349 aa).

Over 1–36 the chain is Extracellular; sequence MNGTEGNNFYVPLSNRTGLVRSPFEYPQYYLAEPWQ. Residues Asn2 and Asn15 are each glycosylated (N-linked (GlcNAc...) asparagine). A helical transmembrane segment spans residues 37-61; sequence FKLLAVYMFFLICLGLPINGLTLIC. Residues 62–73 are Cytoplasmic-facing; sequence TAQHKKLRQPLN. A helical transmembrane segment spans residues 74–99; sequence FILVNLAVAGAIMVCFGFTVTFYTAI. The Extracellular segment spans residues 100–113; it reads NGYFALGPTGCAVE. Cys110 and Cys187 are disulfide-bonded. A helical transmembrane segment spans residues 114–133; sequence GFMATLGGEVALWSLVVLAI. The Cytoplasmic portion of the chain corresponds to 134-152; sequence ERYIVVCKPMGSFKFSSTH. A helical membrane pass occupies residues 153-176; it reads ASAGIAFTWVMAMACAAPPLVGWS. At 177-202 the chain is on the extracellular side; the sequence is RYIPEGIQCSCGPDYYTLNPEYNNES. Residues 203–230 traverse the membrane as a helical segment; that stretch reads YVLYMFICHFILPVTIIFFTYGRLVCTV. Residues 231–252 lie on the Cytoplasmic side of the membrane; sequence KAAAAQQQDSASTQKAEREVTK. The helical transmembrane segment at 253 to 276 threads the bilayer; sequence MVILMVLGFLVAWTPYATVAAWIF. At 277–284 the chain is on the extracellular side; sequence FNKGAAFS. The chain crosses the membrane as a helical span at residues 285–309; the sequence is AQFMAIPAFFSKTSALYNPVIYVLL. The residue at position 296 (Lys296) is an N6-(retinylidene)lysine. At 310-349 the chain is on the cytoplasmic side; that stretch reads NKQFRSCMLTTLFCGKNPLGDEESSTVSTSKTEVSSVSPA. A disordered region spans residues 329–349; sequence GDEESSTVSTSKTEVSSVSPA. Positions 334–349 are enriched in low complexity; sequence STVSTSKTEVSSVSPA.

The protein belongs to the G-protein coupled receptor 1 family. Opsin subfamily. Phosphorylated on some or all of the serine and threonine residues present in the C-terminal region. As to expression, the color pigments are found in the cone photoreceptor cells.

It is found in the membrane. Its function is as follows. Visual pigments are the light-absorbing molecules that mediate vision. They consist of an apoprotein, opsin, covalently linked to cis-retinal. This is Green-sensitive opsin-2 from Carassius auratus (Goldfish).